The sequence spans 546 residues: Chaperonin GroEL (546 aa).

Residues 29–32, Lys-50, 86–90, Gly-414, 477–479, and Asp-493 contribute to the ATP site; these read TLGP, DGTTT, and NAL.

The protein belongs to the chaperonin (HSP60) family. As to quaternary structure, forms a cylinder of 14 subunits composed of two heptameric rings stacked back-to-back. Interacts with the co-chaperonin GroES.

It localises to the cytoplasm. It catalyses the reaction ATP + H2O + a folded polypeptide = ADP + phosphate + an unfolded polypeptide.. In terms of biological role, together with its co-chaperonin GroES, plays an essential role in assisting protein folding. The GroEL-GroES system forms a nano-cage that allows encapsulation of the non-native substrate proteins and provides a physical environment optimized to promote and accelerate protein folding. The protein is Chaperonin GroEL of Leptospira interrogans serogroup Icterohaemorrhagiae serovar Lai (strain 56601).